Here is a 505-residue protein sequence, read N- to C-terminus: Glucose-6-phosphate 1-dehydrogenase (505 aa).

S2 carries the N-acetylserine modification. Residues G18 to K25 and R52 each bind NADP(+). Residue S142 is modified to Phosphoserine. At Y145 the chain carries Phosphotyrosine. Position 157 (K157) interacts with NADP(+). D-glucose 6-phosphate contacts are provided by residues K157, H187–K191, E225, and D244. Residue H249 is the Proton acceptor of the active site. R340 is an NADP(+) binding site. K343 is a D-glucose 6-phosphate binding site. Residues K349, R353, and R375 each coordinate NADP(+). Position 377 (Q377) interacts with D-glucose 6-phosphate. Residues Y383–K385 and R470 contribute to the NADP(+) site.

It belongs to the glucose-6-phosphate dehydrogenase family.

The catalysed reaction is D-glucose 6-phosphate + NADP(+) = 6-phospho-D-glucono-1,5-lactone + NADPH + H(+). Its pathway is carbohydrate degradation; pentose phosphate pathway; D-ribulose 5-phosphate from D-glucose 6-phosphate (oxidative stage): step 1/3. In terms of biological role, catalyzes the rate-limiting step of the oxidative pentose-phosphate pathway, which represents a route for the dissimilation of carbohydrates besides glycolysis. The main function of this enzyme is to provide reducing power (NADPH) and pentose phosphates for fatty acid and nucleic acid synthesis. The polypeptide is Glucose-6-phosphate 1-dehydrogenase (ZWF1) (Saccharomyces cerevisiae (strain ATCC 204508 / S288c) (Baker's yeast)).